Reading from the N-terminus, the 371-residue chain is MSIDDKVRAIVKEFKAYVPGKSKEEIARNYGIDPEKIIKLGSNENPWGCSPKIAEKLMNEVSNLHQYPQPINPELMDEISKFTKMPTENIIVGGDGADEVIDNIMRILIDEGDEVIIPIPTFTQYAISAKIHGANIKWAKFDEENGFKLDVESVLNNITEKTKVIFLCTPNNPTGNVIPTEDIKKIVESTDALVMIDHAYIEYSKGEYDLTNWALKYDNVLVLRTFSKVFGLAGQRVGFGVTSKKIVDYMMRIKPIFSLTRASQVSAITALQDKEFFDRCLKEGIESREQIYNGLKKFKQLEVYPTEANYMLVKVKNGMNSSEFCEALLKKGVIVRDCYSFEGLEPYYFRISIGTFEENERFLKIMSEIVE.

Lysine 228 carries the N6-(pyridoxal phosphate)lysine modification.

It belongs to the class-II pyridoxal-phosphate-dependent aminotransferase family. Histidinol-phosphate aminotransferase subfamily. The cofactor is pyridoxal 5'-phosphate.

It catalyses the reaction L-histidinol phosphate + 2-oxoglutarate = 3-(imidazol-4-yl)-2-oxopropyl phosphate + L-glutamate. It participates in amino-acid biosynthesis; L-histidine biosynthesis; L-histidine from 5-phospho-alpha-D-ribose 1-diphosphate: step 7/9. The sequence is that of Histidinol-phosphate aminotransferase from Methanococcus maripaludis (strain C5 / ATCC BAA-1333).